Reading from the N-terminus, the 61-residue chain is DNA-directed RNA polymerase subunit 12-like protein (61 aa).

Zn(2+) is bound by residues Cys21, Cys24, Cys38, and Cys41.

Belongs to the archaeal Rpo12/eukaryotic RPC10 RNA polymerase subunit family.

Its subcellular location is the nucleus. This Arabidopsis thaliana (Mouse-ear cress) protein is DNA-directed RNA polymerase subunit 12-like protein (NRPB12L).